The primary structure comprises 433 residues: CinA-like protein (433 aa).

It belongs to the CinA family.

This chain is CinA-like protein, found in Frankia casuarinae (strain DSM 45818 / CECT 9043 / HFP020203 / CcI3).